The following is a 443-amino-acid chain: MASELTNRRHEIEQPEAESYYPKPIKPWFVAIRPIRYMLREQRLVFVLVGIAIATLGFTIFSKSSNHQPIPYDVDPLSGYGMRSESSYLPATIHKKPSIEYMSRIGSAGGKIPLGLKRKVLRVVVTGGAGFVGSHLVDRLMARGDNVIVVDNFFTGRKENVMHHFNNPNFEMIRHDVVEPILLEVDQIYHLACPASPVHYKFNPVKTIKTNVVGTLNMLGLAKRVGARFLLTSTSEVYGDPLQHPQVETYWGNVNPIGVRSCYDEGKRTAETLTMDYHRGANVEVRIARIFNTYGPRMCIDDGRVVSNFVAQALRKEPLTVYGDGKQTRSFQFVSDLVEGLMRLMEGEHVGPFNLGNPGEFTMLELAKVVQETIDPNAKIEFRPNTEDDPHKRKPDITKAKELLGWEPKVALRQGLPLMVKDFRQRVFGDQKQDSSTTSSSTE.

A2 is subject to N-acetylalanine. Over 2 to 43 (ASELTNRRHEIEQPEAESYYPKPIKPWFVAIRPIRYMLREQR) the chain is Cytoplasmic. The helical; Signal-anchor for type II membrane protein transmembrane segment at 44-64 (LVFVLVGIAIATLGFTIFSKS) threads the bilayer. The Lumenal segment spans residues 65-443 (SNHQPIPYDV…DSSTTSSSTE (379 aa)). 151 to 176 (DNFFTGRKENVMHHFNNPNFEMIRHD) lines the NAD(+) pocket. R260 serves as a coordination point for substrate. The active-site Proton acceptor is Y263. Residue 263-267 (YDEGK) participates in NAD(+) binding. N292 contributes to the substrate binding site. R304 contributes to the NAD(+) binding site. Residues 305 to 309 (VVSNF), 322 to 329 (YGDGKQTR), and 389 to 393 (DPHKR) each bind substrate.

This sequence belongs to the NAD(P)-dependent epimerase/dehydratase family. UDP-glucuronic acid decarboxylase subfamily. NAD(+) is required as a cofactor.

Its subcellular location is the golgi apparatus. The protein resides in the golgi stack membrane. The enzyme catalyses UDP-alpha-D-glucuronate + H(+) = UDP-alpha-D-xylose + CO2. Its pathway is nucleotide-sugar biosynthesis; UDP-alpha-D-xylose biosynthesis; UDP-alpha-D-xylose from UDP-alpha-D-glucuronate: step 1/1. Catalyzes the NAD-dependent decarboxylation of UDP-glucuronic acid to UDP-xylose. Necessary for the biosynthesis of the core tetrasaccharide in glycosaminoglycan biosynthesis. This is UDP-glucuronic acid decarboxylase 4 (UXS4) from Arabidopsis thaliana (Mouse-ear cress).